A 297-amino-acid chain; its full sequence is MLYQQISQNKRRTVILLFAFFVLLVVIGAAAGYLLADSYQLGAAFALIIGAIYAFSMIFQSTSLVMGMNKAKEITVNDAPDFFHIVEDMALVAQIPMPRVFIIDDPSLNAFATGSSPQNAAVAATTGLLKVMNREELEAVIGHEVSHIRNYDIRISTIAVALASAVTLISSIGGRMMWYSGGRRRDNDRNDNGFGAIMLIFSILSLILAPLAASLVQLAISRQREYLADASSVALTRNPEGMIRALQKLSNSQPMTHPVDDASAALYINEPRKKEKLSALFSTHPPIEDRIERLKHM.

2 helical membrane passes run 14–34 (VILLFAFFVLLVVIGAAAGYL) and 39–59 (YQLGAAFALIIGAIYAFSMIF). Position 143 (histidine 143) interacts with Zn(2+). The active site involves glutamate 144. Histidine 147 lines the Zn(2+) pocket. Helical transmembrane passes span 158 to 178 (IAVALASAVTLISSIGGRMMW) and 193 to 213 (GFGAIMLIFSILSLILAPLAA). Position 225 (glutamate 225) interacts with Zn(2+).

The protein belongs to the peptidase M48B family. Requires Zn(2+) as cofactor.

It localises to the cell membrane. This chain is Protease HtpX homolog, found in Streptococcus equi subsp. equi (strain 4047).